A 234-amino-acid chain; its full sequence is Fibronectin type III domain-containing protein 4 (234 aa).

Positions 1–44 are cleaved as a signal peptide; it reads MPSGCHSSPPSGLRGDMASLVPLSPYLSPTVLLLVSCDLGFVRA. The Extracellular segment spans residues 45–167; that stretch reads DRPPSPVNVT…GLDGERPLQT (123 aa). A Fibronectin type-III domain is found at 47–140; the sequence is PPSPVNVTVT…PRVHFRTLKG (94 aa). 3 N-linked (GlcNAc...) asparagine glycosylation sites follow: asparagine 52, asparagine 97, and asparagine 147. The segment at 122 to 160 is disordered; sequence GLRGESPPGPRVHFRTLKGSDRLPSNSSSPGDITVEGLD. A helical membrane pass occupies residues 168 to 188; the sequence is GEVVIIVVVLLMWAAVIGLFC. Residues 189–234 are Cytoplasmic-facing; that stretch reads RQYDIIKDNDSNNNPKEKGKGPEQSPQGRPVGTRQKKSPSINTIDV. Residues 197–209 are compositionally biased toward basic and acidic residues; sequence NDSNNNPKEKGKG. The segment at 197–234 is disordered; the sequence is NDSNNNPKEKGKGPEQSPQGRPVGTRQKKSPSINTIDV.

As to expression, highly expressed in the liver and the brain, including in the cortex, hypothalamus and hippocampus. Also expressed in adipose tissue.

It localises to the membrane. The protein localises to the secreted. Has anti-inflammatory properties. In the colon, acts on macrophages to down-regulate inflammation. May suppress osteoclastogenesis and mature osteoclast resorptive function. In white adipose tissue, decreases local inflammation, via interaction with GPR116. Also required for proper systemic glucose tolerance, specifically sensitizing white adipocytes to insulin and promoting glucose uptake. The insulin sensitizing function in adipose tissue is mediated by interaction with ADGRF5/GPR116 and activation of cAMP signaling. This is Fibronectin type III domain-containing protein 4 (FNDC4) from Homo sapiens (Human).